The primary structure comprises 240 residues: Ribonuclease PH (240 aa).

Residues arginine 87 and 125–127 (GTR) contribute to the phosphate site.

It belongs to the RNase PH family. Homohexameric ring arranged as a trimer of dimers.

The enzyme catalyses tRNA(n+1) + phosphate = tRNA(n) + a ribonucleoside 5'-diphosphate. Phosphorolytic 3'-5' exoribonuclease that plays an important role in tRNA 3'-end maturation. Removes nucleotide residues following the 3'-CCA terminus of tRNAs; can also add nucleotides to the ends of RNA molecules by using nucleoside diphosphates as substrates, but this may not be physiologically important. Probably plays a role in initiation of 16S rRNA degradation (leading to ribosome degradation) during starvation. In Pseudomonas putida (strain ATCC 47054 / DSM 6125 / CFBP 8728 / NCIMB 11950 / KT2440), this protein is Ribonuclease PH.